Here is a 736-residue protein sequence, read N- to C-terminus: Elongation factor 2 (736 aa).

Positions 18-262 constitute a tr-type G domain; sequence TRVRNIGIIA…AVIKFVPNPV (245 aa). GTP-binding positions include 27-34, 93-97, and 147-150; these read AHVDHGKT, DTPGH, and NKVD. A Diphthamide modification is found at His-603.

Belongs to the TRAFAC class translation factor GTPase superfamily. Classic translation factor GTPase family. EF-G/EF-2 subfamily.

It localises to the cytoplasm. Functionally, catalyzes the GTP-dependent ribosomal translocation step during translation elongation. During this step, the ribosome changes from the pre-translocational (PRE) to the post-translocational (POST) state as the newly formed A-site-bound peptidyl-tRNA and P-site-bound deacylated tRNA move to the P and E sites, respectively. Catalyzes the coordinated movement of the two tRNA molecules, the mRNA and conformational changes in the ribosome. The chain is Elongation factor 2 from Metallosphaera sedula (strain ATCC 51363 / DSM 5348 / JCM 9185 / NBRC 15509 / TH2).